Reading from the N-terminus, the 322-residue chain is Mas-related G-protein coupled receptor member X3 (322 aa).

The Extracellular portion of the chain corresponds to methionine 1–threonine 31. The helical transmembrane segment at valine 32–leucine 52 threads the bilayer. The Cytoplasmic portion of the chain corresponds to glycine 53 to alanine 60. A helical transmembrane segment spans residues valine 61–valine 81. The Extracellular portion of the chain corresponds to arginine 82–lysine 96. Residues isoleucine 97–serine 117 form a helical membrane-spanning segment. Over threonine 118–serine 139 the chain is Cytoplasmic. Residues valine 140–phenylalanine 160 traverse the membrane as a helical segment. Residues cysteine 161–aspartate 177 lie on the Extracellular side of the membrane. The chain crosses the membrane as a helical span at residues phenylalanine 178–leucine 198. Topologically, residues leucine 199 to arginine 213 are cytoplasmic. The helical transmembrane segment at leucine 214–isoleucine 234 threads the bilayer. At glutamine 235–histidine 254 the chain is on the extracellular side. The helical transmembrane segment at leucine 255 to valine 275 threads the bilayer. At glycine 276–glutamine 322 the chain is on the cytoplasmic side.

It belongs to the G-protein coupled receptor 1 family. Mas subfamily.

It localises to the cell membrane. Functionally, orphan receptor. Probably involved in the function of nociceptive neurons. May regulate nociceptor function and/or development, including the sensation or modulation of pain. Potently activated by enkephalins. In Macaca mulatta (Rhesus macaque), this protein is Mas-related G-protein coupled receptor member X3 (MRGPRX3).